The sequence spans 160 residues: Cyclic pyranopterin monophosphate synthase (160 aa).

Substrate-binding positions include 75–77 (LCH) and 113–114 (ME). The active site involves aspartate 128.

It belongs to the MoaC family. As to quaternary structure, homohexamer; trimer of dimers.

The enzyme catalyses (8S)-3',8-cyclo-7,8-dihydroguanosine 5'-triphosphate = cyclic pyranopterin phosphate + diphosphate. It participates in cofactor biosynthesis; molybdopterin biosynthesis. In terms of biological role, catalyzes the conversion of (8S)-3',8-cyclo-7,8-dihydroguanosine 5'-triphosphate to cyclic pyranopterin monophosphate (cPMP). The sequence is that of Cyclic pyranopterin monophosphate synthase from Methylobacterium sp. (strain 4-46).